The following is a 615-amino-acid chain: Envelope glycoprotein (615 aa).

Positions 1–84 are cleaved as a signal peptide; that stretch reads MPKRRAGFRK…VQNGAAAAFW (84 aa). Residues 85–378 lie on the Extracellular side of the membrane; sequence AYIPDPPMIQ…INTALSRPKR (294 aa). Residues Asn-108, Asn-127, Asn-178, Asn-219, Asn-275, and Asn-319 are each glycosylated (N-linked (GlcNAc...) asparagine; by host). Residues 379–402 traverse the membrane as a helical segment; sequence GLSLIILGIVSLITLIATAVTACV. The Cytoplasmic segment spans residues 403–615; that stretch reads SLAQSIQAAH…KERGAAGDDP (213 aa). Coiled coils occupy residues 411–461 and 495–531; these read AHTV…FRMK and IWFN…TVDN. The interval 590 to 593 is required for cell transformation; it reads YRTM.

In terms of assembly, interacts with sheep HYAL2 receptor.

The protein localises to the virion membrane. In terms of biological role, the envelope proteins induce cell transformation leading to ovine pulmonary adenocarcinoma (OPA), a contagious lung cancer of sheep and goat. They bind to the HYAL2 receptor for cell entry. Env proteins probably do not act as oncogenes by themselves, but may rather liberate an oncogenic factor that would normally be negatively regulated. One mechanism of transformation seems to involve activation of the phosphoinositide-3-OH kinase (PI3K)/Akt pathway but does not involve the virus receptor HYAL2, and the other seems to involve Env binding to HYAL2, HYAL2 degradation, and activation of the MST1R receptor tyrosine kinase, which is normally suppressed by HYAL2. This Ovis aries (Sheep) protein is Envelope glycoprotein (env).